Consider the following 59-residue polypeptide: uncharacterized protein (59 aa).

The tract at residues 1–59 (MAKKPGENTGKNGGIYQEVGPRGGKKDNFATVKDNERLPPTTKPGNGWVLDKRTPDSKK) is disordered. Composition is skewed to basic and acidic residues over residues 24–37 (GKKDNFATVKDNER) and 50–59 (LDKRTPDSKK).

This is an uncharacterized protein from Salmonella phage P22 (Bacteriophage P22).